Reading from the N-terminus, the 315-residue chain is Adenine deaminase (315 aa).

His14, His16, and His194 together coordinate Zn(2+). The active-site Proton donor is Glu197. Asp275 is a binding site for Zn(2+). Residue Asp276 coordinates substrate.

The protein belongs to the metallo-dependent hydrolases superfamily. Adenosine and AMP deaminases family. Adenine deaminase type 2 subfamily. The cofactor is Zn(2+).

The catalysed reaction is adenine + H2O + H(+) = hypoxanthine + NH4(+). Catalyzes the hydrolytic deamination of adenine to hypoxanthine. Plays an important role in the purine salvage pathway and in nitrogen catabolism. This is Adenine deaminase from Pseudomonas putida (strain ATCC 47054 / DSM 6125 / CFBP 8728 / NCIMB 11950 / KT2440).